Here is a 170-residue protein sequence, read N- to C-terminus: ATP synthase subunit b (170 aa).

Residues 11 to 31 (AFTFGDAFFTLFAFAILLVLI) traverse the membrane as a helical segment.

The protein belongs to the ATPase B chain family. In terms of assembly, F-type ATPases have 2 components, F(1) - the catalytic core - and F(0) - the membrane proton channel. F(1) has five subunits: alpha(3), beta(3), gamma(1), delta(1), epsilon(1). F(0) has three main subunits: a(1), b(2) and c(10-14). The alpha and beta chains form an alternating ring which encloses part of the gamma chain. F(1) is attached to F(0) by a central stalk formed by the gamma and epsilon chains, while a peripheral stalk is formed by the delta and b chains.

It localises to the cell membrane. F(1)F(0) ATP synthase produces ATP from ADP in the presence of a proton or sodium gradient. F-type ATPases consist of two structural domains, F(1) containing the extramembraneous catalytic core and F(0) containing the membrane proton channel, linked together by a central stalk and a peripheral stalk. During catalysis, ATP synthesis in the catalytic domain of F(1) is coupled via a rotary mechanism of the central stalk subunits to proton translocation. Its function is as follows. Component of the F(0) channel, it forms part of the peripheral stalk, linking F(1) to F(0). The sequence is that of ATP synthase subunit b from Listeria welshimeri serovar 6b (strain ATCC 35897 / DSM 20650 / CCUG 15529 / CIP 8149 / NCTC 11857 / SLCC 5334 / V8).